The sequence spans 231 residues: Elongation factor 1-delta 2 (231 aa).

Alanine 2 is modified (N-acetylalanine). The 63-residue stretch at 11-73 (SGLKKLDEHL…LRISGVSAEG (63 aa)) folds into the GST C-terminal domain. The interval 82-136 (SPITEEAVATPPAADSKDTAAEEEDDDDVDLFGEETEEEKKAAEERAASVKASTK) is disordered. The span at 102–118 (AEEEDDDDVDLFGEETE) shows a compositional bias: acidic residues. Residues 119–129 (EEKKAAEERAA) are compositionally biased toward basic and acidic residues.

It belongs to the EF-1-beta/EF-1-delta family. As to quaternary structure, EF-1 is composed of 4 subunits: alpha, beta (1B-alpha=beta'), delta (1B-beta), and gamma (1B-gamma).

Its function is as follows. EF-1-beta and EF-1-delta stimulate the exchange of GDP bound to EF-1-alpha to GTP. This chain is Elongation factor 1-delta 2, found in Arabidopsis thaliana (Mouse-ear cress).